A 458-amino-acid chain; its full sequence is UDP-N-acetylmuramoylalanine--D-glutamate ligase (458 aa).

124–130 (GSDGKTT) is an ATP binding site.

The protein belongs to the MurCDEF family.

Its subcellular location is the cytoplasm. The catalysed reaction is UDP-N-acetyl-alpha-D-muramoyl-L-alanine + D-glutamate + ATP = UDP-N-acetyl-alpha-D-muramoyl-L-alanyl-D-glutamate + ADP + phosphate + H(+). It participates in cell wall biogenesis; peptidoglycan biosynthesis. Functionally, cell wall formation. Catalyzes the addition of glutamate to the nucleotide precursor UDP-N-acetylmuramoyl-L-alanine (UMA). The polypeptide is UDP-N-acetylmuramoylalanine--D-glutamate ligase (Clostridium botulinum (strain Alaska E43 / Type E3)).